Reading from the N-terminus, the 308-residue chain is MAAITASMVAELRGKTDAPMMECKKALTEAGGDMAKAEELLRIKLGTKAGKAAARITAEGVVACHIDGTRGALIEVNSETDFVSKNDSFLQLARAAAELVARHQPADIAALGALAYEQDGFGPTLEDVRKGLIGKIGENMVLRRFRYFGAGHRLVSYLHGTRIGVVVEFDGDATVAKDVAMHIAAMKPVALSSAGVPAELIAAERSVAAAKAAEDKARAEAEGRPVQSDDIVAKRIEGAVHKYLKDVALFNQAFVKNDKQTVEQVLKAAGTTVKGFALYVVGEGMEKKVDDFAAEVAAQVAAAKAAVT.

The segment at 80–83 (TDFV) is involved in Mg(2+) ion dislocation from EF-Tu.

It belongs to the EF-Ts family.

It is found in the cytoplasm. Its function is as follows. Associates with the EF-Tu.GDP complex and induces the exchange of GDP to GTP. It remains bound to the aminoacyl-tRNA.EF-Tu.GTP complex up to the GTP hydrolysis stage on the ribosome. The chain is Elongation factor Ts from Verminephrobacter eiseniae (strain EF01-2).